Consider the following 112-residue polypeptide: Large ribosomal subunit protein eL30 (112 aa).

The protein belongs to the eukaryotic ribosomal protein eL30 family.

This Euphorbia esula (Leafy spurge) protein is Large ribosomal subunit protein eL30 (RPL30).